A 467-amino-acid polypeptide reads, in one-letter code: Syntaxin-5 (467 aa).

2 disordered regions span residues 1–53 and 58–77; these read MQTR…QSLV and GHEA…SIST. Topologically, residues 1-445 are cytoplasmic; that stretch reads MQTRRRLHQT…KYFQSVSKNR (445 aa). Over residues 10–22 the composition is skewed to low complexity; that stretch reads TDQQDYSSSSTYT. Residues 29-45 are compositionally biased toward gly residues; that stretch reads GGAGAGSVGTGTAGGSV. Over residues 68–77 the composition is skewed to polar residues; the sequence is NYQSGDSIST. A coiled-coil region spans residues 245-269; the sequence is IKGDLNALNQQIARLQDISKDQRRH. Residues 310 to 335 form a disordered region; the sequence is QQKTRRDQFSQGPGPLAAHTVSPSTA. The region spanning 375–437 is the t-SNARE coiled-coil homology domain; the sequence is DNYVQQRAET…EAAHGEILKY (63 aa). The helical; Anchor for type IV membrane protein transmembrane segment at 446 to 466 threads the bilayer; it reads WLMIKIFGVLIFFFLFFVVFM. Position 467 (Ser-467) is a topological domain, vesicular.

Belongs to the syntaxin family. As to quaternary structure, homodimer.

It is found in the golgi apparatus. Its subcellular location is the cis-Golgi network membrane. Functionally, mediates endoplasmic reticulum to Golgi transport. The sequence is that of Syntaxin-5 from Drosophila melanogaster (Fruit fly).